A 1208-amino-acid polypeptide reads, in one-letter code: Lysine-specific demethylase JMJ17 (1208 aa).

A PHD-type 1; degenerate zinc finger spans residues 1-36 (MLLCDSCNKGWHIYCLSPPLKHIPLGNWYCLECLNT). C4, C7, C30, and C33 together coordinate Zn(2+). The JmjC domain occupies 126–292 (EYCGSPWNLN…YGGSGAELYR (167 aa)). Residues H172, E174, and H260 each coordinate Fe cation. C369, C372, C383, C385, C392, H395, C400, and C402 together coordinate Zn(2+). A C5HC2 zinc finger spans residues 369-421 (CIICQQFLHLSAIVCNCRPSVFACLEHWKHLCECEPTKLRLEYRYTLAELDMM). A Nuclear localization signal motif is present at residues 613–620 (SKKISSAK). The PHD-type 2 zinc finger occupies 1099–1145 (MLHCICLKPYNSRSMVSCSQCGEWYHTYCLKLHWRPKAYVCSACCPL). Zn(2+) contacts are provided by C1102, C1104, C1116, C1119, H1124, C1127, C1139, and C1142.

This sequence belongs to the JARID1 histone demethylase family. Requires Fe(2+) as cofactor. Expressed in inflorescences, roots, seedlings and siliques, and, at low levels, in leaves and stems.

It localises to the nucleus. The enzyme catalyses N(6),N(6),N(6)-trimethyl-L-lysyl(4)-[histone H3] + 2-oxoglutarate + O2 = N(6),N(6)-dimethyl-L-lysyl(4)-[histone H3] + formaldehyde + succinate + CO2. It carries out the reaction N(6),N(6)-dimethyl-L-lysyl(4)-[histone H3] + 2-oxoglutarate + O2 = N(6)-methyl-L-lysyl(4)-[histone H3] + formaldehyde + succinate + CO2. It catalyses the reaction N(6)-methyl-L-lysyl(4)-[histone H3] + 2-oxoglutarate + O2 = L-lysyl(4)-[histone H3] + formaldehyde + succinate + CO2. The catalysed reaction is N(6),N(6),N(6)-trimethyl-L-lysyl(4)-[histone H3] + 3 2-oxoglutarate + 3 O2 = L-lysyl(4)-[histone H3] + 3 formaldehyde + 3 succinate + 3 CO2. Functions as a histone H3 'Lys-4' (H3K4me) demethylase involved in the regulation of gene expression. Active on H3K4me1, H3K4me2 and H3K4me3. Repressor of the abscisic acid (ABA) signaling pathway, especially during stomatal closure regulation. Negative regulator of responses to dehydration stress by binding directly to the chromatin of SRK2E/OST1 and demethylating H3K4me3 to regulates its expression. Together with JMJ14 and JMJ16, required for plant growth and development. In Arabidopsis thaliana (Mouse-ear cress), this protein is Lysine-specific demethylase JMJ17.